A 393-amino-acid chain; its full sequence is Carbamoyl phosphate synthase small chain (393 aa).

A CPSase region spans residues 1–194; sequence MSKDTTTYQG…TYVIEAEGEE (194 aa). Positions 61, 245, and 247 each coordinate L-glutamine. Positions 195-390 constitute a Glutamine amidotransferase type-1 domain; that stretch reads RHTVVAYDLG…VELMDADAQK (196 aa). Catalysis depends on cysteine 273, which acts as the Nucleophile. Positions 274, 277, 315, 317, and 318 each coordinate L-glutamine. Active-site residues include histidine 363 and glutamate 365.

Belongs to the CarA family. In terms of assembly, composed of two chains; the small (or glutamine) chain promotes the hydrolysis of glutamine to ammonia, which is used by the large (or ammonia) chain to synthesize carbamoyl phosphate. Tetramer of heterodimers (alpha,beta)4.

The enzyme catalyses hydrogencarbonate + L-glutamine + 2 ATP + H2O = carbamoyl phosphate + L-glutamate + 2 ADP + phosphate + 2 H(+). It carries out the reaction L-glutamine + H2O = L-glutamate + NH4(+). It participates in amino-acid biosynthesis; L-arginine biosynthesis; carbamoyl phosphate from bicarbonate: step 1/1. Its pathway is pyrimidine metabolism; UMP biosynthesis via de novo pathway; (S)-dihydroorotate from bicarbonate: step 1/3. Functionally, small subunit of the glutamine-dependent carbamoyl phosphate synthetase (CPSase). CPSase catalyzes the formation of carbamoyl phosphate from the ammonia moiety of glutamine, carbonate, and phosphate donated by ATP, constituting the first step of 2 biosynthetic pathways, one leading to arginine and/or urea and the other to pyrimidine nucleotides. The small subunit (glutamine amidotransferase) binds and cleaves glutamine to supply the large subunit with the substrate ammonia. The protein is Carbamoyl phosphate synthase small chain of Corynebacterium glutamicum (strain ATCC 13032 / DSM 20300 / JCM 1318 / BCRC 11384 / CCUG 27702 / LMG 3730 / NBRC 12168 / NCIMB 10025 / NRRL B-2784 / 534).